Here is a 294-residue protein sequence, read N- to C-terminus: 4-hydroxy-tetrahydrodipicolinate synthase (294 aa).

Threonine 45 lines the pyruvate pocket. Tyrosine 133 serves as the catalytic Proton donor/acceptor. Lysine 161 acts as the Schiff-base intermediate with substrate in catalysis. Residue isoleucine 203 participates in pyruvate binding.

It belongs to the DapA family. As to quaternary structure, homotetramer; dimer of dimers.

It is found in the cytoplasm. It catalyses the reaction L-aspartate 4-semialdehyde + pyruvate = (2S,4S)-4-hydroxy-2,3,4,5-tetrahydrodipicolinate + H2O + H(+). Its pathway is amino-acid biosynthesis; L-lysine biosynthesis via DAP pathway; (S)-tetrahydrodipicolinate from L-aspartate: step 3/4. Functionally, catalyzes the condensation of (S)-aspartate-beta-semialdehyde [(S)-ASA] and pyruvate to 4-hydroxy-tetrahydrodipicolinate (HTPA). In Shewanella baltica (strain OS223), this protein is 4-hydroxy-tetrahydrodipicolinate synthase.